Here is a 324-residue protein sequence, read N- to C-terminus: MPRKIWTGSINFGLVTIPVGLYAATEDHSIQFHQYERGTTDRVRMKRVNERTGDEVGYNDIVKGREVGGVLVAVEPSELDEIAPKLSRTIDINTFVDLNAIDPVYFQKTYWLAPGSKEHFRPYNLLRRAMDETNQVGIATFVMRGREYLTAVRAEDSVLALNTMFFADEIRDPGELVGDASSVAKPSDKEIQMATMIIESMSGDWEPEQYEDTYTARVEKLLEDKAEGRAPEVEEAPAEPSDVIDLTEALRRSVDQARRGRGGQVPRQRDEEQDVSALSKAELDKKAKELGIKGRSKMKRADLEAAVAESQGSASGGRRRRRAS.

The Ku domain occupies 10 to 193 (INFGLVTIPV…AKPSDKEIQM (184 aa)). Residues 256–324 (QARRGRGGQV…SGGRRRRRAS (69 aa)) are disordered. The span at 281-292 (AELDKKAKELGI) shows a compositional bias: basic and acidic residues.

It belongs to the prokaryotic Ku family. Homodimer. Interacts with LigD.

Functionally, with LigD forms a non-homologous end joining (NHEJ) DNA repair enzyme, which repairs dsDNA breaks with reduced fidelity. Binds linear dsDNA with 5'- and 3'- overhangs but not closed circular dsDNA nor ssDNA. Recruits and stimulates the ligase activity of LigD. This Saccharopolyspora erythraea (strain ATCC 11635 / DSM 40517 / JCM 4748 / NBRC 13426 / NCIMB 8594 / NRRL 2338) protein is Non-homologous end joining protein Ku 1.